The chain runs to 578 residues: Potassium-transporting ATPase potassium-binding subunit (578 aa).

10 helical membrane passes run 3-23 (NAIL…IPLG), 65-85 (SFSV…LNLL), 134-154 (GLTV…FALI), 175-195 (IVLY…VSQG), 261-281 (FSNL…CFTF), 293-313 (AIFI…GVSE), 397-417 (GLYG…LMVG), 435-455 (AMLI…LASI), 503-523 (IGLI…AIAG), and 543-563 (LLFI…SFFP).

It belongs to the KdpA family. The system is composed of three essential subunits: KdpA, KdpB and KdpC.

Its subcellular location is the cell membrane. Its function is as follows. Part of the high-affinity ATP-driven potassium transport (or Kdp) system, which catalyzes the hydrolysis of ATP coupled with the electrogenic transport of potassium into the cytoplasm. This subunit binds the extracellular potassium ions and delivers the ions to the membrane domain of KdpB through an intramembrane tunnel. The sequence is that of Potassium-transporting ATPase potassium-binding subunit from Clostridium perfringens (strain ATCC 13124 / DSM 756 / JCM 1290 / NCIMB 6125 / NCTC 8237 / Type A).